Reading from the N-terminus, the 397-residue chain is MTERVVLAYSGGLDTSVAIGWIAEETGAEVIAVAVDVGQGGEDLDVIRKRALACGAVEAEVADAKDEFAEEYCLPAIKANARYMDRYPLVSALSRPAIVKHLVAAAKKHDASIVAHGCTGKGNDQVRFEAGIQALGPDLKCIAPVRDYAMTRDKAIAFCEAKQLPIATTKKSPYSIDQNVFGRAIETGFLEDIWNAPIEDIFEYTSNPAEPREADEVVISFASGVPVAIDGRPVTVLQAIQQLNERAGAQGIGRIDMVEDRLVGIKSREVYEAPGAIALITAHQELENVTVERELARFKRQVEQRWGELVYDGLWFSPLKRALDGFIEEANQQVTGDIRMTLHAGTAVVTGRRSERSLYDFDLATYDTGDTFDQSKAQGFIDIFALSAKIAAKRDLV.

8 to 16 (AYSGGLDTS) is an ATP binding site. Residue Y87 coordinates L-citrulline. G117 lines the ATP pocket. Residues T119, N123, and D124 each contribute to the L-aspartate site. N123 is an L-citrulline binding site. L-citrulline contacts are provided by R127, S175, E259, and Y271.

The protein belongs to the argininosuccinate synthase family. Type 1 subfamily. As to quaternary structure, homotetramer.

The protein resides in the cytoplasm. The enzyme catalyses L-citrulline + L-aspartate + ATP = 2-(N(omega)-L-arginino)succinate + AMP + diphosphate + H(+). The protein operates within amino-acid biosynthesis; L-arginine biosynthesis; L-arginine from L-ornithine and carbamoyl phosphate: step 2/3. The polypeptide is Argininosuccinate synthase (Streptomyces clavuligerus).